A 903-amino-acid polypeptide reads, in one-letter code: Probable dipeptidyl-aminopeptidase B (903 aa).

The segment at 1–83 is disordered; it reads MGKFEDDGNS…PLISSGTKTG (83 aa). The Cytoplasmic segment spans residues 1–90; the sequence is MGKFEDDGNS…KTGSSSRLRK (90 aa). A compositionally biased stretch (polar residues) spans 10–37; the sequence is SESVPLTRQRSESLASQTSTDSGLSIAS. A helical; Signal-anchor for type II membrane protein transmembrane segment spans residues 91-111; that stretch reads IVWLLVLLCVGGWVLSFVLFL. The Vacuolar segment spans residues 112–903; sequence TQKRPDTAAL…TANPKPQEST (792 aa). Residues 121 to 143 are disordered; sequence LSSASTVEIHEPGPATGGTSHGK. Residues asparagine 268, asparagine 349, and asparagine 640 are each glycosylated (N-linked (GlcNAc...) asparagine). The Charge relay system role is filled by serine 754. An N-linked (GlcNAc...) asparagine glycan is attached at asparagine 808. Residues aspartate 831 and histidine 864 each act as charge relay system in the active site.

The protein belongs to the peptidase S9B family.

Its subcellular location is the vacuole membrane. It catalyses the reaction Release of an N-terminal dipeptide, Xaa-Yaa-|-Zaa-, from a polypeptide, preferentially when Yaa is Pro, provided Zaa is neither Pro nor hydroxyproline.. In terms of biological role, type IV dipeptidyl-peptidase which removes N-terminal dipeptides sequentially from polypeptides having unsubstituted N-termini provided that the penultimate residue is proline. The polypeptide is Probable dipeptidyl-aminopeptidase B (dapB) (Penicillium rubens (strain ATCC 28089 / DSM 1075 / NRRL 1951 / Wisconsin 54-1255) (Penicillium chrysogenum)).